The primary structure comprises 171 residues: Adenine phosphoribosyltransferase (171 aa).

It belongs to the purine/pyrimidine phosphoribosyltransferase family. As to quaternary structure, homodimer.

It localises to the cytoplasm. It catalyses the reaction AMP + diphosphate = 5-phospho-alpha-D-ribose 1-diphosphate + adenine. It functions in the pathway purine metabolism; AMP biosynthesis via salvage pathway; AMP from adenine: step 1/1. Catalyzes a salvage reaction resulting in the formation of AMP, that is energically less costly than de novo synthesis. In Acidiphilium cryptum (strain JF-5), this protein is Adenine phosphoribosyltransferase.